Here is a 371-residue protein sequence, read N- to C-terminus: Cytochrome b (371 aa).

The next 4 helical transmembrane spans lie at 25-45 (FGSMLLTCLILQITTGFFLAI), 69-90 (WIMQNLHAIGASMFFICIYIHI), 105-125 (WLSGTTLLITLMATAFFGYVL), and 170-190 (FFALHFILPFAIISLSSIHII). Heme b-binding residues include His75 and His89. His174 and His188 together coordinate heme b. His193 is a binding site for a ubiquinone. Transmembrane regions (helical) follow at residues 218-238 (YKDTLMTISLFILMFTILSFS), 280-300 (LGGTLALLMSVTILMTAPFTH), 312-332 (LAQMAFWTLIATFITITWTAS), and 339-358 (FIIISQMTSILYFLFFIMNP).

Belongs to the cytochrome b family. The cytochrome bc1 complex contains 3 respiratory subunits (MT-CYB, CYC1 and UQCRFS1), 2 core proteins (UQCRC1 and UQCRC2) and probably 6 low-molecular weight proteins. Heme b is required as a cofactor.

It localises to the mitochondrion inner membrane. In terms of biological role, component of the ubiquinol-cytochrome c reductase complex (complex III or cytochrome b-c1 complex) that is part of the mitochondrial respiratory chain. The b-c1 complex mediates electron transfer from ubiquinol to cytochrome c. Contributes to the generation of a proton gradient across the mitochondrial membrane that is then used for ATP synthesis. The polypeptide is Cytochrome b (MT-CYB) (Sinomicrurus kelloggi (Kellogg's coral snake)).